The chain runs to 238 residues: 1-(5-phosphoribosyl)-5-[(5-phosphoribosylamino)methylideneamino] imidazole-4-carboxamide isomerase (238 aa).

Asp8 serves as the catalytic Proton acceptor. Asp130 functions as the Proton donor in the catalytic mechanism.

This sequence belongs to the HisA/HisF family.

It localises to the cytoplasm. The catalysed reaction is 1-(5-phospho-beta-D-ribosyl)-5-[(5-phospho-beta-D-ribosylamino)methylideneamino]imidazole-4-carboxamide = 5-[(5-phospho-1-deoxy-D-ribulos-1-ylimino)methylamino]-1-(5-phospho-beta-D-ribosyl)imidazole-4-carboxamide. It participates in amino-acid biosynthesis; L-histidine biosynthesis; L-histidine from 5-phospho-alpha-D-ribose 1-diphosphate: step 4/9. The sequence is that of 1-(5-phosphoribosyl)-5-[(5-phosphoribosylamino)methylideneamino] imidazole-4-carboxamide isomerase from Methanococcus maripaludis (strain C6 / ATCC BAA-1332).